Here is a 504-residue protein sequence, read N- to C-terminus: Maturase K (504 aa).

It belongs to the intron maturase 2 family. MatK subfamily.

Its subcellular location is the plastid. It localises to the chloroplast. Usually encoded in the trnK tRNA gene intron. Probably assists in splicing its own and other chloroplast group II introns. The chain is Maturase K from Hamamelis japonica (Japanese witch hazel).